The primary structure comprises 88 residues: Large ribosomal subunit protein bL31B (88 aa).

The protein belongs to the bacterial ribosomal protein bL31 family. Type B subfamily. As to quaternary structure, part of the 50S ribosomal subunit.

The chain is Large ribosomal subunit protein bL31B from Bordetella bronchiseptica (strain ATCC BAA-588 / NCTC 13252 / RB50) (Alcaligenes bronchisepticus).